Here is a 503-residue protein sequence, read N- to C-terminus: Maturase K (503 aa).

Belongs to the intron maturase 2 family. MatK subfamily.

The protein resides in the plastid. It localises to the chloroplast. In terms of biological role, usually encoded in the trnK tRNA gene intron. Probably assists in splicing its own and other chloroplast group II introns. This is Maturase K from Rosa acicularis (Prickly rose).